Consider the following 783-residue polypeptide: FYN-binding protein 1 (783 aa).

Composition is skewed to polar residues over residues 1 to 18 and 25 to 45; these read MAKY…SVNS and GPNS…QGNA. The tract at residues 1–502 is disordered; that stretch reads MAKYNTGGNP…KEKKEQEIKK (502 aa). Residue Lys-3 is modified to N6-acetyllysine. A phosphoserine mark is found at Ser-28 and Ser-46. Residues 69 to 79 show a composition bias toward basic and acidic residues; it reads SSEEKPDKEPK. At Ser-225 the chain carries Phosphoserine. Composition is skewed to basic and acidic residues over residues 240–252 and 278–290; these read PARE…DHAG and NGEE…KIDA. Phosphoserine is present on Ser-329. Positions 345-363 are enriched in pro residues; the sequence is KPLPPLFTLGPPPPKPNRP. The interaction with SKAP1 stretch occupies residues 348-448; it reads PPLFTLGPPP…QDGVTHSDGA (101 aa). Polar residues predominate over residues 374 to 387; the sequence is TSSGNSTSKGQTSY. Positions 392–424 are enriched in pro residues; it reads LPPPPPSHPASQPPLPASHPSQPPVPSLPPRNI. A compositionally biased stretch (acidic residues) spans 451 to 465; it reads LDEEQDSEGETYEDI. Positions 456–507 form a coiled coil; sequence DSEGETYEDIEASKEREKKREKEEKKRLELEKKEQKEKEKKEQEIKKKFKLT. Ser-457 bears the Phosphoserine mark. The SH2-binding signature appears at 462–465; sequence YEDI. The span at 466 to 501 shows a compositional bias: basic and acidic residues; it reads EASKEREKKREKEEKKRLELEKKEQKEKEKKEQEIK. A Nuclear localization signal motif is present at residues 469 to 505; sequence KEREKKREKEEKKRLELEKKEQKEKEKKEQEIKKKFK. The SH3 1 domain occupies 511-572; that stretch reads QVIHLAKACC…KTTAVEIDYD (62 aa). Phosphotyrosine is present on Tyr-571. Residues Ser-573 and Ser-580 each carry the phosphoserine modification. The SH2-binding; to LCP2 motif lies at 595–598; it reads YDDV. The interval 598–678 is disordered; sequence VAEQDDISSH…GTNVGKAKTE (81 aa). Composition is skewed to acidic residues over residues 620–635 and 646–656; these read PDDD…DADD and MGDEVYDDVDT. Positions 625-628 match the SH2-binding; to FYN motif; that stretch reads YDGI. Residue Tyr-651 is modified to Phosphotyrosine. Residues 674-700 carry the Nuclear localization signal motif; that stretch reads KAKTEEKDLKKLKKQEKEEKDFRKKFK. Residues 700 to 768 enclose the SH3 2 domain; it reads KYDGEIRVLY…LRSYLADNDG (69 aa).

As to quaternary structure, part of a complex consisting of SKAP2, FYB1 and PTPNS1. Part of a complex consisting of SKAP2, FYB1 and LILRB3. Part of a complex consisting of SKAP1, FYB1 and CLNK. Interacts with CLNK (via its SH2 domain); this interaction allows SKAP1 and FYB1 to recruit FYN to the complex, thus promoting the phosphorylation of CLNK by FYN. Interacts with FYN. Interacts with LCP2. Interacts with SKAP1. Interacts with SKAP2. Interacts with FASLG. Interacts with EVL. Interacts with TMEM47. Interacts with LCK. Post-translationally, T-cell receptor ligation leads to increased tyrosine phosphorylation. As to expression, expressed in hematopoietic tissues such as myeloid and T-cells, spleen and thymus. Not expressed in B-cells, nor in non-lymphoid tissues.

It is found in the cytoplasm. It localises to the nucleus. Its subcellular location is the cell junction. Functionally, acts as an adapter protein of the FYN and LCP2 signaling cascades in T-cells. May play a role in linking T-cell signaling to remodeling of the actin cytoskeleton. Modulates the expression of IL2. Involved in platelet activation. Prevents the degradation of SKAP1 and SKAP2. May be involved in high affinity immunoglobulin epsilon receptor signaling in mast cells. This chain is FYN-binding protein 1, found in Homo sapiens (Human).